A 255-amino-acid chain; its full sequence is Accessory gland-specific peptide 26Aa (255 aa).

The N-terminal stretch at 1–18 (MNQILLCSQILLLLFAVA) is a signal peptide. A disordered region spans residues 86–110 (PINNSKSRKNSSTLPSQILTDKPNQ). The span at 87–110 (INNSKSRKNSSTLPSQILTDKPNQ) shows a compositional bias: polar residues. 3 N-linked (GlcNAc...) asparagine glycosylation sites follow: Asn-88, Asn-95, and Asn-136. 2 disordered regions span residues 177–197 (NAQN…KDIA) and 235–255 (NNPA…PSTT). Residues 183–192 (KPTKSCKKRP) are compositionally biased toward basic residues. Residues 245 to 255 (KSPSEGNPSTT) are compositionally biased toward polar residues.

Post-translationally, it undergoes several cleavages as it is secreted and it is further processed in the recipient female. Main cells of the accessory glands of males.

Its subcellular location is the secreted. The protein resides in the extracellular space. Functionally, this protein is transferred from male to female's hemolymph during mating, affecting egglaying and behavior after mating. The protein is Accessory gland-specific peptide 26Aa (Acp26Aa) of Drosophila simulans (Fruit fly).